Consider the following 942-residue polypeptide: MGLTKQYLRYVASAVFGLIGSQKGNIVFVTLRGEKGRYVAVPACEHVFIWDLRKGEKILILQGNKQEVTCLCPSPDGLHLAVGYEDGAIRIFSLLSGEGNITFNGHKAAVTSLKYDQLGGRLASGSKDTDVIIWDVINESGLYRLKGHKDAVTQALFLRERNLLVTSGKDTMVKWWDLDNQHCFKTMVGHRTEVWGLVLVSEEKRLITGAADSELRAWDIDYLQEIDDPEEPEPKKIKECPGIQDTPESEDSTLEADDEKSEDRILSCSKAGSIMREGRDRVVNLAVDKTGRILACHGTDSVLEVFCILSKAEVQKKMDKKLKKARKKARLNSANEEEDPETSVSMTLQDEILRVAKIKTSAKIKSFDLIHSPQGELKAVFLLQNNLVELYSLNASLPAPQPVRTSRITIGGHRSDVRTLSFSSDNIAVLSAAADSIKIWNRSTLQCIRTMPCEYALCSFFVPGDRQVVIGTKTGNLQLYDLASGTLLETIAAHDGALWSMSLSPDQRGFVTGGADKAVKFWDFELVTDKNSTQKRLSVKQTRTLQLDEDVLCVSYSPNQKLLAVSLLDCTVKVFYVDTLKFFLSLYGHKLPVLCMDISHDGALIATGSADRNVKIWGLDFGDCHRSLFAHDDSVMYLRFVPKSHLFFTAGKDHKIKQWDADKFEHIQTLEGHHQEIWCLAVSPSGDYVVSASHDKSLRLWERTREPLILEEEREMQREAEYEESVAKEDQPAVPGETQGDNYFTGKKTIETVKAAERIMEAIELHREETAKMKEHRAICKAAGKEVPLPVNPILMAHGNISPSAYVLETFKGIRSSELEEALLVLPFSYVPDVLTLFNEFIQTGLDVELLCRCLFFLLRIHFGQITSNQMLVPVIEKLKETTISKVRQVQDAIGFNMAGLDYLKRECEAKSEVMFFAEATSHLEEKKKKRKNRKRMILTLT.

5 WD repeats span residues 21 to 60, 63 to 102, 105 to 144, 147 to 186, and 189 to 228; these read SQKG…KILI, GNKQ…GNIT, GHKA…GLYR, GHKD…CFKT, and GHRT…EIDD. The segment at 230–263 is disordered; the sequence is EEPEPKKIKECPGIQDTPESEDSTLEADDEKSED. Positions 247–260 are enriched in acidic residues; the sequence is PESEDSTLEADDEK. Ser-249 is modified (phosphoserine). 8 WD repeats span residues 277-316, 412-450, 452-490, 493-532, 546-585, 588-629, 630-669, and 672-711; these read EGRD…EVQK, GHRS…CIRT, PCEY…LLET, AHDG…DKNS, QLDE…FFLS, GHKL…RSLF, AHDD…HIQT, and GHHQ…LILE. A Glycyl lysine isopeptide (Lys-Gly) (interchain with G-Cter in SUMO2) cross-link involves residue Lys-473. Residues 723-742 form a disordered region; it reads EESVAKEDQPAVPGETQGDN. Ser-725 is modified (phosphoserine).

Belongs to the WD repeat WDR3/UTP12 family. Part of the small subunit (SSU) processome, composed of more than 70 proteins and the RNA chaperone small nucleolar RNA (snoRNA) U3.

It localises to the nucleus. Its subcellular location is the nucleolus. In terms of biological role, part of the small subunit (SSU) processome, first precursor of the small eukaryotic ribosomal subunit. During the assembly of the SSU processome in the nucleolus, many ribosome biogenesis factors, an RNA chaperone and ribosomal proteins associate with the nascent pre-rRNA and work in concert to generate RNA folding, modifications, rearrangements and cleavage as well as targeted degradation of pre-ribosomal RNA by the RNA exosome. This chain is WD repeat-containing protein 3 (Wdr3), found in Mus musculus (Mouse).